Reading from the N-terminus, the 307-residue chain is Porphobilinogen deaminase (307 aa).

C239 is modified (S-(dipyrrolylmethanemethyl)cysteine).

The protein belongs to the HMBS family. Monomer. Requires dipyrromethane as cofactor.

The catalysed reaction is 4 porphobilinogen + H2O = hydroxymethylbilane + 4 NH4(+). It participates in porphyrin-containing compound metabolism; protoporphyrin-IX biosynthesis; coproporphyrinogen-III from 5-aminolevulinate: step 2/4. Its function is as follows. Tetrapolymerization of the monopyrrole PBG into the hydroxymethylbilane pre-uroporphyrinogen in several discrete steps. This chain is Porphobilinogen deaminase, found in Campylobacter jejuni subsp. jejuni serotype O:6 (strain 81116 / NCTC 11828).